The following is a 401-amino-acid chain: Cartilage-associated protein (401 aa).

Positions 1–26 (MEPGRRGAAALLALLCVACALRAGRA) are cleaved as a signal peptide. N87 and N363 each carry an N-linked (GlcNAc...) asparagine glycan.

It belongs to the leprecan family. In terms of tissue distribution, found in articular chondrocytes. Expressed in a variety of tissues.

The protein localises to the secreted. It localises to the extracellular space. It is found in the extracellular matrix. Its function is as follows. Necessary for efficient 3-hydroxylation of fibrillar collagen prolyl residues. This Homo sapiens (Human) protein is Cartilage-associated protein (CRTAP).